A 441-amino-acid polypeptide reads, in one-letter code: Probable magnesium transporter NIPA8 (441 aa).

At 1 to 4 (MGEW) the chain is on the extracellular side. A helical transmembrane segment spans residues 5-25 (VIGAFINIFGSVAINFGTNLL). Topologically, residues 26 to 56 (KLGHNERERLALQDGGGKMPLKPIIHNQTWR) are cytoplasmic. Residues 57 to 77 (VGILVFLLGNCLNFISFGYAA) form a helical membrane-spanning segment. The Extracellular portion of the chain corresponds to 78–79 (QS). Residues 80–100 (LLAALGSIQFVSNIAFAYVVL) traverse the membrane as a helical segment. Residues 101–105 (NKMVT) are Cytoplasmic-facing. The helical transmembrane segment at 106–126 (VKVLVATAFIVLGNVFLVAFG) threads the bilayer. The Extracellular portion of the chain corresponds to 127 to 144 (NHQSPVFTPEQLAEKYSN). A helical membrane pass occupies residues 145–165 (VTFLVYCGILILIVAVHHFLY). Over 166 to 184 (RKGEVLISTPGQEISSYWK) the chain is Cytoplasmic. A helical membrane pass occupies residues 185-205 (MLLPFSYAVVSGAIGSCSVLF). Residues 206 to 222 (AKSLSNLLRLAMSSSYQ) are Extracellular-facing. Residues 223-243 (LHSWFTYSMLLLFLSTAGFWM) traverse the membrane as a helical segment. Over 244–255 (TRLNEGLSLYDA) the chain is Cytoplasmic. The helical transmembrane segment at 256 to 276 (ILIVPMFQIAWTFFSICTGCI) threads the bilayer. Residues 277–288 (YFQEFQVFDALR) lie on the Extracellular side of the membrane. The helical transmembrane segment at 289-309 (TTMFILGMMCVFIGISLLAPD) threads the bilayer. Residues 310–441 (DTRGNETKDN…MLEKTISSKA (132 aa)) are Cytoplasmic-facing. The segment at 313–347 (GNETKDNSSSLDSIVSSSVPTEEDRLIPQSSEDGH) is disordered. Residues 320 to 330 (SSSLDSIVSSS) show a composition bias toward low complexity. Basic and acidic residues predominate over residues 334-347 (EEDRLIPQSSEDGH).

Belongs to the NIPA (TC 2.A.7) family. As to quaternary structure, homodimer.

It localises to the cell membrane. Its subcellular location is the early endosome. In terms of biological role, acts as a Mg(2+) transporter. Can also transport other divalent cations such as Fe(2+), Sr(2+), Ba(2+), Mn(2+) and Co(2+) but to a much less extent than Mg(2+). This is Probable magnesium transporter NIPA8 from Arabidopsis thaliana (Mouse-ear cress).